Consider the following 256-residue polypeptide: Thiazole synthase (256 aa).

The Schiff-base intermediate with DXP role is filled by lysine 95. 1-deoxy-D-xylulose 5-phosphate is bound by residues glycine 156, 182–183 (AG), and 204–205 (NT).

Belongs to the ThiG family. Homotetramer. Forms heterodimers with either ThiH or ThiS.

The protein resides in the cytoplasm. It carries out the reaction [ThiS sulfur-carrier protein]-C-terminal-Gly-aminoethanethioate + 2-iminoacetate + 1-deoxy-D-xylulose 5-phosphate = [ThiS sulfur-carrier protein]-C-terminal Gly-Gly + 2-[(2R,5Z)-2-carboxy-4-methylthiazol-5(2H)-ylidene]ethyl phosphate + 2 H2O + H(+). It participates in cofactor biosynthesis; thiamine diphosphate biosynthesis. Functionally, catalyzes the rearrangement of 1-deoxy-D-xylulose 5-phosphate (DXP) to produce the thiazole phosphate moiety of thiamine. Sulfur is provided by the thiocarboxylate moiety of the carrier protein ThiS. In vitro, sulfur can be provided by H(2)S. The sequence is that of Thiazole synthase from Klebsiella pneumoniae (strain 342).